We begin with the raw amino-acid sequence, 408 residues long: Epsin-3 (408 aa).

N-acetylserine is present on Ser-2. The 134-residue stretch at 24-157 (NVVFNYTEME…SDDNKIRAER (134 aa)) folds into the ENTH domain. Positions 162-182 (ETAKKYKGVAGGSASADGSLN) are disordered. Phosphoserine is present on residues Ser-196, Ser-198, Ser-203, Ser-212, and Ser-223. 2 disordered regions span residues 199–322 (ADFD…ITPA) and 338–408 (TAKA…LLSF). Acidic residues predominate over residues 201–210 (FDSDNEDNED). A compositionally biased stretch (polar residues) spans 211-231 (GSFSQNGYNDNASRATSTPGQ). The span at 249 to 263 (KPSKELIQEDEKKAD) shows a compositional bias: basic and acidic residues. The segment covering 264 to 273 (EEEDDDDEFS) has biased composition (acidic residues). Residues 279 to 317 (VPVTNPANSFNLLNTSPIEGMPATTSSMPFYNSSTTDQG) show a composition bias toward polar residues. Low complexity predominate over residues 338-361 (TAKASAEAPSAPKASQAKAAASNP). 2 stretches are compositionally biased toward polar residues: residues 362–371 (VSNSTTALST) and 388–398 (QQEQNTNNNHT). Residues 399-408 (SSKEIDLLSF) show a composition bias toward basic and acidic residues.

As to quaternary structure, interacts with the clathrin adapter GGA2, and VPS27.

The protein resides in the cytoplasm. The protein localises to the golgi apparatus. It localises to the trans-Golgi network membrane. It is found in the cytoplasmic vesicle. Its subcellular location is the clathrin-coated vesicle membrane. In terms of biological role, involved in the recruitment of clathrin to the Golgi network and endosomes to form clathrin coated vesicles. Plays a role in the trafficking of clathrin between the Golgi network and endosomes. Binds to membranes enriched in phosphatidylinositol-3,5-bisphosphate (PtdIns(3,5)P2) and, in association with VPS27, is involved in protein sorting at the multivesicular body (MVB). The protein is Epsin-3 (ENT3) of Saccharomyces cerevisiae (strain ATCC 204508 / S288c) (Baker's yeast).